The following is an 87-amino-acid chain: Phosphoribosyl-ATP pyrophosphatase (87 aa).

It belongs to the PRA-PH family.

It localises to the cytoplasm. It catalyses the reaction 1-(5-phospho-beta-D-ribosyl)-ATP + H2O = 1-(5-phospho-beta-D-ribosyl)-5'-AMP + diphosphate + H(+). The protein operates within amino-acid biosynthesis; L-histidine biosynthesis; L-histidine from 5-phospho-alpha-D-ribose 1-diphosphate: step 2/9. The polypeptide is Phosphoribosyl-ATP pyrophosphatase (Salinibacter ruber (strain DSM 13855 / M31)).